The chain runs to 366 residues: Leucine dehydrogenase (366 aa).

Lys80 is an active-site residue. 180–186 (GVGHVAY) contacts NAD(+).

Belongs to the Glu/Leu/Phe/Val dehydrogenases family. In terms of assembly, homooctamer.

The enzyme catalyses L-leucine + NAD(+) + H2O = 4-methyl-2-oxopentanoate + NH4(+) + NADH + H(+). It functions in the pathway amino-acid degradation; L-leucine degradation; 4-methyl-2-oxopentanoate from L-leucine (dehydrogenase route): step 1/1. With respect to regulation, inhibited by pyridoxal phosphate. Catalyzes the reversible deamination of L-leucine to 4-methyl-2-oxopentanoate. Exhibits the highest activity with L-leucine as substrate, but can also use other L-amino acids such as L-isoleucine, L-valine and L-2-aminovaleric acid. All of the oxo analogs of the amino acid substrates serve as good substrates for the reverse reaction. The protein is Leucine dehydrogenase (ldh) of Thermoactinomyces intermedius.